The sequence spans 62 residues: Large ribosomal subunit protein bL32 (62 aa).

The tract at residues 1-20 (MAVPARHTSKQKKRSRRGHI) is disordered. A compositionally biased stretch (basic residues) spans 7–20 (HTSKQKKRSRRGHI).

This sequence belongs to the bacterial ribosomal protein bL32 family.

This is Large ribosomal subunit protein bL32 from Lactobacillus acidophilus (strain ATCC 700396 / NCK56 / N2 / NCFM).